Reading from the N-terminus, the 394-residue chain is NADH dehydrogenase [ubiquinone] iron-sulfur protein 2 (394 aa).

Residues 1–16 show a composition bias toward polar residues; that stretch reads MTTKNRQIKNFTSNFG. Residues 1–22 are disordered; that stretch reads MTTKNRQIKNFTSNFGPQHPAA.

It belongs to the complex I 49 kDa subunit family. In terms of assembly, complex I is composed of about 45 different subunits. This is a component of the iron-sulfur (IP) fragment of the enzyme.

The protein localises to the mitochondrion. The enzyme catalyses a ubiquinone + NADH + 5 H(+)(in) = a ubiquinol + NAD(+) + 4 H(+)(out). Functionally, core subunit of the mitochondrial membrane respiratory chain NADH dehydrogenase (Complex I) that is believed to belong to the minimal assembly required for catalysis. Complex I functions in the transfer of electrons from NADH to the respiratory chain. The immediate electron acceptor for the enzyme is believed to be ubiquinone. Component of the iron-sulfur (IP) fragment of the enzyme. This Nicotiana sylvestris (Wood tobacco) protein is NADH dehydrogenase [ubiquinone] iron-sulfur protein 2 (NAD7).